We begin with the raw amino-acid sequence, 354 residues long: Probable L-ascorbate-6-phosphate lactonase UlaG (354 aa).

This sequence belongs to the UlaG family. A divalent metal cation serves as cofactor.

It is found in the cytoplasm. It carries out the reaction L-ascorbate 6-phosphate + H2O = 3-dehydro-L-gulonate 6-phosphate. It functions in the pathway cofactor degradation; L-ascorbate degradation; D-xylulose 5-phosphate from L-ascorbate: step 1/4. Its function is as follows. Probably catalyzes the hydrolysis of L-ascorbate-6-P into 3-keto-L-gulonate-6-P. Is essential for L-ascorbate utilization under anaerobic conditions. The chain is Probable L-ascorbate-6-phosphate lactonase UlaG from Escherichia fergusonii (strain ATCC 35469 / DSM 13698 / CCUG 18766 / IAM 14443 / JCM 21226 / LMG 7866 / NBRC 102419 / NCTC 12128 / CDC 0568-73).